The sequence spans 492 residues: Sestrin-1 (492 aa).

The interval 71–252 is N-terminal domain; may mediate the alkylhydroperoxide reductase activity; that stretch reads FADSFAALGR…ICDITNGNHS (182 aa). The active-site Cysteine sulfenic acid (-SOH) intermediate is Cys-130. 2 positions are modified to phosphoserine: Ser-293 and Ser-314. The segment at 321–492 is C-terminal domain; mediates TORC1 regulation; it reads PARDVSRHFE…ALRAITRYMT (172 aa). L-leucine is bound by residues 386–389, Thr-398, and Glu-463; that span reads TYNT.

The protein belongs to the sestrin family. Interacts with the GATOR2 complex which is composed of MIOS, SEC13, SEH1L, WDR24 and WDR59; the interaction is negatively regulated by leucine. Interacts with RRAGA, RRAGB, RRAGC and RRAGD; may function as a guanine nucleotide dissociation inhibitor for RRAGs and regulate them. Interacts with KEAP1, RBX1 and SQSTM1; in the SQSTM1-dependent autophagic degradation of KEAP1. May interact with PRDX1.

The protein resides in the nucleus. Its subcellular location is the cytoplasm. The catalysed reaction is a hydroperoxide + L-cysteinyl-[protein] = S-hydroxy-L-cysteinyl-[protein] + an alcohol. Functionally, functions as an intracellular leucine sensor that negatively regulates the TORC1 signaling pathway through the GATOR complex. In absence of leucine, binds the GATOR subcomplex GATOR2 and prevents TORC1 signaling. Binding of leucine to SESN2 disrupts its interaction with GATOR2 thereby activating the TORC1 signaling pathway. This stress-inducible metabolic regulator may also play a role in protection against oxidative and genotoxic stresses. May positively regulate the transcription by NFE2L2 of genes involved in the response to oxidative stress by facilitating the SQSTM1-mediated autophagic degradation of KEAP1. Moreover, may prevent the accumulation of reactive oxygen species (ROS) through the alkylhydroperoxide reductase activity born by the N-terminal domain of the protein. Was originally reported to contribute to oxidative stress resistance by reducing PRDX1. However, this could not be confirmed. The protein is Sestrin-1 of Macaca fascicularis (Crab-eating macaque).